Reading from the N-terminus, the 323-residue chain is NADH-ubiquinone oxidoreductase chain 1 (323 aa).

9 consecutive transmembrane segments (helical) span residues 10–30 (LLYIIIEGGLKSLIVIIGLLI), 52–72 (PNVVGFVGLLQPLADGLKLVL), 84–104 (IIYAIAPILTFTISIVLWSVI), 119–139 (VIFILAISSIGVYGIILAGWA), 157–177 (VSYEVALGLIILSIITYAGTV), 189–209 (VWFIVPLLPGFLLAFISALAE), 245–265 (YANIILMSVLLSVFFLGGIVS), 268–288 (ISGAMKGVGMLCSFIWVRATL), and 302–322 (KSLLPFALLIYIGVISMVLII).

Belongs to the complex I subunit 1 family.

Its subcellular location is the mitochondrion inner membrane. It carries out the reaction a ubiquinone + NADH + 5 H(+)(in) = a ubiquinol + NAD(+) + 4 H(+)(out). Functionally, core subunit of the mitochondrial membrane respiratory chain NADH dehydrogenase (Complex I) that is believed to belong to the minimal assembly required for catalysis. Complex I functions in the transfer of electrons from NADH to the respiratory chain. The immediate electron acceptor for the enzyme is believed to be ubiquinone. The polypeptide is NADH-ubiquinone oxidoreductase chain 1 (nad1) (Dictyostelium citrinum (Slime mold)).